The sequence spans 133 residues: Transcriptional regulator MraZ (133 aa).

SpoVT-AbrB domains lie at 5 to 47 and 76 to 119; these read TYEH…SKDD and TVEI…SKNK.

It belongs to the MraZ family. Forms oligomers.

It is found in the cytoplasm. The protein localises to the nucleoid. This Mycoplasma mycoides subsp. mycoides SC (strain CCUG 32753 / NCTC 10114 / PG1) protein is Transcriptional regulator MraZ.